The primary structure comprises 422 residues: Light-independent protochlorophyllide reductase subunit N (422 aa).

Cys26, Cys51, and Cys112 together coordinate [4Fe-4S] cluster.

The protein belongs to the BchN/ChlN family. In terms of assembly, protochlorophyllide reductase is composed of three subunits; BchL, BchN and BchB. Forms a heterotetramer of two BchB and two BchN subunits. It depends on [4Fe-4S] cluster as a cofactor.

The catalysed reaction is chlorophyllide a + oxidized 2[4Fe-4S]-[ferredoxin] + 2 ADP + 2 phosphate = protochlorophyllide a + reduced 2[4Fe-4S]-[ferredoxin] + 2 ATP + 2 H2O. It participates in porphyrin-containing compound metabolism; bacteriochlorophyll biosynthesis (light-independent). Its function is as follows. Component of the dark-operative protochlorophyllide reductase (DPOR) that uses Mg-ATP and reduced ferredoxin to reduce ring D of protochlorophyllide (Pchlide) to form chlorophyllide a (Chlide). This reaction is light-independent. The NB-protein (BchN-BchB) is the catalytic component of the complex. The sequence is that of Light-independent protochlorophyllide reductase subunit N from Acidiphilium rubrum.